Reading from the N-terminus, the 223-residue chain is Translation initiation factor 6 (223 aa).

This sequence belongs to the eIF-6 family. Associates with the 50S ribosomal subunit, specifically with protein L14. Binds to 23S rRNA, possibly between where the 30S and 50S subunits associate to initiate translation. Modified in an unknown fashion (not phosphorylation) following release from 50S ribosomal subunits.

In terms of biological role, binds to the 50S ribosomal subunit and prevents its association with the 30S ribosomal subunit to form the 70S initiation complex. Inhibits translation of both leadered and leaderless mRNAs, maybe by binding to the 50S ribosome subunit, preventing it from binding to the 30S subunit. The sequence is that of Translation initiation factor 6 from Saccharolobus solfataricus (strain ATCC 35092 / DSM 1617 / JCM 11322 / P2) (Sulfolobus solfataricus).